A 496-amino-acid polypeptide reads, in one-letter code: Cytochrome P450 71D18 (496 aa).

The helical; Signal-anchor for type II membrane protein transmembrane segment at 2-22 (ELDLLSAIIILVATYIVSLLI) threads the bilayer. Cysteine 436 contributes to the heme binding site.

The protein belongs to the cytochrome P450 family. Heme serves as cofactor.

Its subcellular location is the endoplasmic reticulum membrane. The catalysed reaction is (4S)-limonene + reduced [NADPH--hemoprotein reductase] + O2 = (1S,5R)-carveol + oxidized [NADPH--hemoprotein reductase] + H2O + H(+). Its function is as follows. Hydroxylates (-)-(4S)-limonene to (-)-trans-carveol, a precursor of (-)-carvone. Fluorinated substrate analogs are hydroxylated with the same regio- and stereochemistry. This chain is Cytochrome P450 71D18 (CYP71D18), found in Mentha gracilis (Gingermint).